We begin with the raw amino-acid sequence, 496 residues long: Glutamyl-tRNA(Gln) amidotransferase subunit A (496 aa).

Residues Lys75 and Ser150 each act as charge relay system in the active site. Ser174 acts as the Acyl-ester intermediate in catalysis.

This sequence belongs to the amidase family. GatA subfamily. In terms of assembly, heterotrimer of A, B and C subunits.

It catalyses the reaction L-glutamyl-tRNA(Gln) + L-glutamine + ATP + H2O = L-glutaminyl-tRNA(Gln) + L-glutamate + ADP + phosphate + H(+). In terms of biological role, allows the formation of correctly charged Gln-tRNA(Gln) through the transamidation of misacylated Glu-tRNA(Gln) in organisms which lack glutaminyl-tRNA synthetase. The reaction takes place in the presence of glutamine and ATP through an activated gamma-phospho-Glu-tRNA(Gln). This is Glutamyl-tRNA(Gln) amidotransferase subunit A from Burkholderia lata (strain ATCC 17760 / DSM 23089 / LMG 22485 / NCIMB 9086 / R18194 / 383).